Consider the following 143-residue polypeptide: Large ribosomal subunit protein uL16 (143 aa).

Residues 1-17 (MLQPKKTKFRRSQKGRM) are compositionally biased toward basic residues. The tract at residues 1 to 25 (MLQPKKTKFRRSQKGRMKGNAQRGN) is disordered.

This sequence belongs to the universal ribosomal protein uL16 family. In terms of assembly, part of the 50S ribosomal subunit.

Binds 23S rRNA and is also seen to make contacts with the A and possibly P site tRNAs. The protein is Large ribosomal subunit protein uL16 of Azobacteroides pseudotrichonymphae genomovar. CFP2.